The primary structure comprises 116 residues: Protein Rev (116 aa).

A phosphoserine; by host CK2 mark is found at Ser-5 and Ser-8. Residues 18–26 (LIKFLYQSN) are homomultimerization. A disordered region spans residues 23 to 49 (YQSNPPPNPEGTRQARRNRRRRWRERQ). Residues 34 to 50 (TRQARRNRRRRWRERQR) carry the Nuclear localization signal and RNA-binding (RRE) motif. A compositionally biased stretch (basic residues) spans 36–47 (QARRNRRRRWRE). The Nuclear export signal and binding to XPO1 signature appears at 73–84 (LQLPPLERLTLD). A phosphoserine; by host mark is found at Ser-92 and Ser-99.

It belongs to the HIV-1 REV protein family. In terms of assembly, homomultimer; when bound to the RRE. Multimeric assembly is essential for activity and may involve XPO1. Binds to human KPNB1, XPO1, TNPO1, RANBP5 and IPO7. Interacts with the viral Integrase. Interacts with human KHDRBS1. Interacts with human NAP1; this interaction decreases Rev multimerization and stimulates its activity. Interacts with human DEAD-box helicases DDX3 and DDX24; these interactions may serve for viral RNA export to the cytoplasm and packaging, respectively. Interacts with human PSIP1; this interaction may inhibit HIV-1 DNA integration by promoting dissociation of the Integrase-LEDGF/p75 complex. Post-translationally, asymmetrically arginine dimethylated at one site by host PRMT6. Methylation impairs the RNA-binding activity and export of viral RNA from the nucleus to the cytoplasm. Phosphorylated by protein kinase CK2. Presence of, and maybe binding to the N-terminus of the regulatory beta subunit of CK2 is necessary for CK2-mediated Rev's phosphorylation.

The protein localises to the host nucleus. The protein resides in the host nucleolus. It is found in the host cytoplasm. Functionally, escorts unspliced or incompletely spliced viral pre-mRNAs (late transcripts) out of the nucleus of infected cells. These pre-mRNAs carry a recognition sequence called Rev responsive element (RRE) located in the env gene, that is not present in fully spliced viral mRNAs (early transcripts). This function is essential since most viral proteins are translated from unspliced or partially spliced pre-mRNAs which cannot exit the nucleus by the pathway used by fully processed cellular mRNAs. Rev itself is translated from a fully spliced mRNA that readily exits the nucleus. Rev's nuclear localization signal (NLS) binds directly to KPNB1/Importin beta-1 without previous binding to KPNA1/Importin alpha-1. KPNB1 binds to the GDP bound form of RAN (Ran-GDP) and targets Rev to the nucleus. In the nucleus, the conversion from Ran-GDP to Ran-GTP dissociates Rev from KPNB1 and allows Rev's binding to the RRE in viral pre-mRNAs. Rev multimerization on the RRE via cooperative assembly exposes its nuclear export signal (NES) to the surface. Rev can then form a complex with XPO1/CRM1 and Ran-GTP, leading to nuclear export of the complex. Conversion from Ran-GTP to Ran-GDP mediates dissociation of the Rev/RRE/XPO1/RAN complex, so that Rev can return to the nucleus for a subsequent round of export. Beside KPNB1, also seems to interact with TNPO1/Transportin-1, RANBP5/IPO5 and IPO7/RANBP7 for nuclear import. The nucleoporin-like HRB/RIP is an essential cofactor that probably indirectly interacts with Rev to release HIV RNAs from the perinuclear region to the cytoplasm. This Human immunodeficiency virus type 1 group M subtype B (isolate PCV12) (HIV-1) protein is Protein Rev.